The primary structure comprises 20 residues: 35 kDa cell wall protein (20 aa).

It is found in the secreted. It localises to the cell wall. The sequence is that of 35 kDa cell wall protein from Phaseolus vulgaris (Kidney bean).